A 337-amino-acid chain; its full sequence is Pentalenene synthase (337 aa).

Mg(2+) contacts are provided by aspartate 80 and aspartate 84. A DDXXD motif motif is present at residues 80–84 (DDLFD). Cysteines 128 and 136 form a disulfide. Asparagine 219, serine 223, and glutamate 227 together coordinate Mg(2+).

It belongs to the terpene synthase family. In terms of assembly, monomer. Mg(2+) is required as a cofactor.

It carries out the reaction (2E,6E)-farnesyl diphosphate = pentalenene + diphosphate. It functions in the pathway sesquiterpene biosynthesis; pentalenene biosynthesis; pentalenene from farnesyl diphosphate: step 1/1. It participates in antibiotic biosynthesis; pentalenolactone biosynthesis. Its function is as follows. Catalyzes the cyclization of farnesyl diphosphate (FPP) to the tricyclic sesquiterpene pentalenene, which is the hydrocarbon precursor of the pentalenolactone family of antibiotics produced by a variety of Streptomyces species. This Streptomyces exfoliatus (Streptomyces hydrogenans) protein is Pentalenene synthase (penA).